The chain runs to 306 residues: MGNLVIGSRGSELALWQANHIKERLKKECLIESEIQIVKTKGDKILDTPLNKIGGKGLFTKELEELLLKGTIDLAVHSLKDVPVVFEKGLDLACITKRADVRDTFLSVKFPDLMSLPKGAKVGTTSLRRSMQLKLKRQDLDTESLRGNVQTRLKKLECGEFDAIILAEAGLCRLEIQGAKYRKAFSVKEMIPSMGQGALGVEMLKNHKHFATLQKLNDEKSAFCCRLEREFIKGLNGGCQIPIGVHASLMGDRVKIQAVLGLPNGKEVITKEKRGDKTKAFDLVQELLEEFLQSGAKEILEKAQLF.

Position 239 is an S-(dipyrrolylmethanemethyl)cysteine (C239).

Belongs to the HMBS family. As to quaternary structure, monomer. Dipyrromethane is required as a cofactor.

It catalyses the reaction 4 porphobilinogen + H2O = hydroxymethylbilane + 4 NH4(+). It participates in porphyrin-containing compound metabolism; protoporphyrin-IX biosynthesis; coproporphyrinogen-III from 5-aminolevulinate: step 2/4. Tetrapolymerization of the monopyrrole PBG into the hydroxymethylbilane pre-uroporphyrinogen in several discrete steps. The polypeptide is Porphobilinogen deaminase (Helicobacter pylori (strain P12)).